The primary structure comprises 177 residues: MRIDAISIGKNPPDDINVIVEVPVGGHPIKYEMDKDAGALIVDRFLYTPMTYPGNYGFVPHTLSDDGDPIDVLICNTRPLVPGCVINVRPIGVMIMEDDGGKDEKILAVPAPKLTQRYDKVHNYTDLPEITLKQIEHFFEHYKDLEPGKWVKMGGWQDVDVAKKLIVEAIERYKTQG.

Residues Lys-30, Arg-44, and Tyr-56 each contribute to the substrate site. Positions 66, 71, and 103 each coordinate Mg(2+). Tyr-142 provides a ligand contact to substrate.

It belongs to the PPase family. As to quaternary structure, homohexamer. It depends on Mg(2+) as a cofactor.

The protein localises to the cytoplasm. It catalyses the reaction diphosphate + H2O = 2 phosphate + H(+). Catalyzes the hydrolysis of inorganic pyrophosphate (PPi) forming two phosphate ions. The chain is Inorganic pyrophosphatase from Agrobacterium fabrum (strain C58 / ATCC 33970) (Agrobacterium tumefaciens (strain C58)).